Consider the following 576-residue polypeptide: 3-hydroxy-3-methylglutaryl coenzyme A reductase 1 (576 aa).

Residues 1-35 (MDSRRRPSKPLLTSSGEVLHRKQASPVTDEDQIHR) are disordered. The next 2 helical transmembrane spans lie at 42 to 62 (ALPL…FSVA) and 89 to 109 (AIVS…IDFV). The active-site Charge relay system is the Glu-255. N-linked (GlcNAc...) asparagine glycosylation is present at Asn-319. Active-site charge relay system residues include Lys-387 and Asp-463. Residues 532-552 (LLATIVAGSVLAGELSLMSAI) traverse the membrane as a helical segment. The active-site Proton donor is His-561. An N-linked (GlcNAc...) asparagine glycan is attached at Asn-565.

Belongs to the HMG-CoA reductase family. As to expression, expressed in trichomes, leaves, flowers, roots and stems.

It is found in the endoplasmic reticulum membrane. The protein localises to the plastid. It localises to the chloroplast membrane. Its subcellular location is the peroxisome membrane. It catalyses the reaction (R)-mevalonate + 2 NADP(+) + CoA = (3S)-3-hydroxy-3-methylglutaryl-CoA + 2 NADPH + 2 H(+). Its pathway is metabolic intermediate biosynthesis; (R)-mevalonate biosynthesis; (R)-mevalonate from acetyl-CoA: step 3/3. Catalyzes the synthesis of mevalonate, the specific precursor of all isoprenoid compounds present in plants. Component of the triterpene saponins (e.g. ginsenosides or panaxosides) and phytosterols biosynthetic pathways. Promotes triterpenes accumulation in roots. The polypeptide is 3-hydroxy-3-methylglutaryl coenzyme A reductase 1 (Cannabis sativa (Hemp)).